We begin with the raw amino-acid sequence, 204 residues long: Distal tail protein pb9 (204 aa).

As to quaternary structure, homohexamer. Interacts with baseplate tube protein p140 and baseplate hub protein pb3.

It localises to the virion. In terms of biological role, forms the simplified baseplate, together with the p132 collar protein, the baseplate tube protein p140 and baseplate hub protein pb3. This chain is Distal tail protein pb9 (D16), found in Escherichia phage T5 (Enterobacteria phage T5).